Consider the following 488-residue polypeptide: Pup--protein ligase (488 aa).

E33 provides a ligand contact to Mg(2+). ATP is bound at residue R76. Y78 contributes to the Mg(2+) binding site. The active-site Proton acceptor is D80. E86 serves as a coordination point for Mg(2+). T89 and W453 together coordinate ATP.

It belongs to the Pup ligase/Pup deamidase family. Pup-conjugating enzyme subfamily.

The enzyme catalyses ATP + [prokaryotic ubiquitin-like protein]-L-glutamate + [protein]-L-lysine = ADP + phosphate + N(6)-([prokaryotic ubiquitin-like protein]-gamma-L-glutamyl)-[protein]-L-lysine.. The protein operates within protein degradation; proteasomal Pup-dependent pathway. Its pathway is protein modification; protein pupylation. Functionally, catalyzes the covalent attachment of the prokaryotic ubiquitin-like protein modifier Pup to the proteasomal substrate proteins, thereby targeting them for proteasomal degradation. This tagging system is termed pupylation. The ligation reaction involves the side-chain carboxylate of the C-terminal glutamate of Pup and the side-chain amino group of a substrate lysine. This is Pup--protein ligase from Bifidobacterium adolescentis (strain ATCC 15703 / DSM 20083 / NCTC 11814 / E194a).